The chain runs to 155 residues: NADPH-dependent 7-cyano-7-deazaguanine reductase (155 aa).

Cysteine 53 serves as the catalytic Thioimide intermediate. Aspartate 60 acts as the Proton donor in catalysis. Substrate is bound by residues 75–77 (VES) and 94–95 (HE).

This sequence belongs to the GTP cyclohydrolase I family. QueF type 1 subfamily.

It localises to the cytoplasm. The catalysed reaction is 7-aminomethyl-7-carbaguanine + 2 NADP(+) = 7-cyano-7-deazaguanine + 2 NADPH + 3 H(+). The protein operates within tRNA modification; tRNA-queuosine biosynthesis. Its function is as follows. Catalyzes the NADPH-dependent reduction of 7-cyano-7-deazaguanine (preQ0) to 7-aminomethyl-7-deazaguanine (preQ1). This is NADPH-dependent 7-cyano-7-deazaguanine reductase from Ruegeria pomeroyi (strain ATCC 700808 / DSM 15171 / DSS-3) (Silicibacter pomeroyi).